The chain runs to 68 residues: Serine rich endogenous peptide 13 (68 aa).

Positions 1 to 31 (MATKASNLVVFLLSLLLLFLLISFQVGVADA) are cleaved as a signal peptide. Residues 33-68 (RNKRQGQEQRVDYDYPRPPTAPIYLPPSKSRKGKGP) form a disordered region. The span at 37–47 (QGQEQRVDYDY) shows a compositional bias: basic and acidic residues. The span at 48–57 (PRPPTAPIYL) shows a compositional bias: pro residues. The SCOOP motif signature appears at 54–68 (PIYLPPSKSRKGKGP). The SxS motif essential for MIK2 binding signature appears at 60–62 (SKS).

The protein belongs to the serine rich endogenous peptide (SCOOP) phytocytokine family. Interacts with MIK2 (via extracellular leucine-rich repeat domain); this interaction triggers the formation of complex between MIK2 and the BAK1/SERK3 and SERK4 coreceptors, and subsequent BAK1 activation by phosphorylation. In terms of tissue distribution, mostly expressed in stems and flowers and, to a lower extent, in seedlings shoots, roots, siliques, seeds and leaves.

It localises to the cell membrane. The protein localises to the secreted. It is found in the extracellular space. The protein resides in the apoplast. Its function is as follows. Brassicaceae-specific phytocytokine (plant endogenous peptide released into the apoplast) perceived by MIK2 in a BAK1/SERK3 and SERK4 coreceptors-dependent manner, that modulates various physiological and antimicrobial processes including growth prevention and reactive oxygen species (ROS) response regulation. Promotes the expression of immune-related marker genes (e.g. WRKY30, WRKY33 and CYP81F2) in a MIK2-dependent manner. Inhibits root growth and regulates root meristems. Prevents general growth and development. Exhibits antibacterial effects against Pseudomonas syringae pv. tomato DC3000, Ralstonia solanacearum, Bacillus subtilis and Agrobacterium tumefaciens, thus being an antimicrobial peptide (AMP). The protein is Serine rich endogenous peptide 13 of Arabidopsis thaliana (Mouse-ear cress).